We begin with the raw amino-acid sequence, 297 residues long: Internalin C (297 aa).

A signal peptide spans 1 to 34 (MLKKNNWLQNAVIAMLVLIVGLCINMGSGTKVQA). 6 LRR repeats span residues 74 to 96 (LSGVQNFNGDNSNIQSLAGMQFF), 97 to 120 (TNLKELHLSHNQISDLSPLKDLTK), 122 to 139 (EELSVNRNRLKNLNGIPS), 140 to 161 (ACLSRLFLDNNELRDTDSLIHL), 162 to 184 (KNLEILSIRNNKLKSIVMLGFLS), and 186 to 207 (LEVLDLHGNEITNTGGLTRLKK).

The protein belongs to the internalin family. As to quaternary structure, interacts in vitro with human intestinal mucin-2 (MUC2) but not with mucin-1; binding is slightly better at pH 5.5, (the pH of the intestine) than at pH 7.4. Interacts with the SH3 6 domain of human DNMBP (Tuba). Interacts with I-kappa-B kinase alpha (IKKA, CHUK).

The protein localises to the secreted. It is found in the host cytoplasm. A virulence enhancer that has at least 2 dissociable functions in infection; it impairs translocation of host transcription factor NF-kappa-B to the nucleus and antagonizes the function of the Tuba dynamin-binding protein, promoting bacterial spreading. Perturbs the morphology of host cell junctions by impairing host DNMBP (Tuba) and WASL interaction, altering cortical tension at the cell junctions and allowing bacteria to more efficiently form bacteria-filled cell protrusions which promote bacterial spreading within infected host tissue. Down-regulates the host inflammation response usually induced by Listeria infection. Interacts with host I-kappa-B kinase alpha (IKKA, CHUK), which prevents IKKA from phosphorylating NF-kappa-B inhibitor alpha (IKBA, NFKBIA) and thus delays degradation of phospho-IKBA. Translocation of host transcription factor p65 (a subunit of NF-kappa-B, RELA) into the nucleus is impaired, which prevents activation of NF-KB-regulated genes. Recognized by serum from healthy humans exposed to L.monocytogenes as well from patients who have recovered from listeriosis. This chain is Internalin C, found in Listeria monocytogenes serotype 1/2a (strain EGD / Mackaness).